The following is a 377-amino-acid chain: Opsin-5 (377 aa).

The Extracellular portion of the chain corresponds to Met-1–Asp-33. Asn-4 carries an N-linked (GlcNAc...) asparagine glycan. Residues Leu-34–Val-54 traverse the membrane as a helical segment. Over Leu-55–Asn-74 the chain is Cytoplasmic. The chain crosses the membrane as a helical span at residues Leu-75 to Phe-95. At Cys-96 to Trp-108 the chain is on the extracellular side. Cys-106 and Cys-183 are joined by a disulfide. A helical transmembrane segment spans residues Tyr-109–Leu-129. Residues Asp-130–Tyr-150 are Cytoplasmic-facing. Residues Ile-151–Leu-171 traverse the membrane as a helical segment. The Extracellular portion of the chain corresponds to Gly-172–Gln-197. A helical transmembrane segment spans residues Val-198–Ser-218. The Cytoplasmic portion of the chain corresponds to Tyr-219–Lys-252. A helical membrane pass occupies residues Val-253–Val-273. Over Trp-274–Ser-288 the chain is Extracellular. The helical transmembrane segment at Val-289 to Ile-309 threads the bilayer. The residue at position 296 (Lys-296) is an N6-(retinylidene)lysine. Over Asp-310–Lys-377 the chain is Cytoplasmic. S-palmitoyl cysteine attachment occurs at residues Cys-315 and Cys-316. A disordered region spans residues Phe-357–Lys-377. Basic and acidic residues predominate over residues Met-363–Lys-377.

This sequence belongs to the G-protein coupled receptor 1 family. Opsin subfamily. In terms of processing, it is uncertain whether Cys-315 or Cys-316 is palmitoylated. Expressed in the brain (at protein level). Weakly expressed in the skin and liver (at protein level). Abundantly expressed in striated muscle cells. Expressed in Math7/Atok7-dependent retinal ganglion cells in the ganglion cell layer (at protein level). Additionally expressed in horizontal and amacrine cells in the inner nuclear layer of the retina (at protein level). Expressed around the base of hair follicles and in epidermal and sebaceous gland cells of the outer ear (at protein level). Abundantly expressed in vibrissae hair follicles and weakly expressed in the vibrissae skin pad, dorsal back skin, and tail.

Its subcellular location is the cell membrane. In terms of biological role, G-protein coupled receptor which selectively activates G(i) type G proteins via ultraviolet A (UVA) light-mediated activation in the retina. Preferentially binds the chromophore 11-cis retinal and is a bistable protein that displays emission peaks at 380 nm (UVA light) and 470 nm (blue light). Required for the light-response in the inner plexiform layer, and contributes to the regulation of the light-response in the nerve fiber layer, via phosphorylated DAT/SLC6A3 dopamine uptake. Involved in local corneal and retinal circadian rhythm photoentrainment via modulation of the UVA light-induced phase-shift of the retina clock. Acts as a circadian photoreceptor in the outer ear and vibrissal pads, via modulation of circadian clock-gene expression in response to violet light during the light-to-dark transition phase and night phase of the circadian cycle. Required in the retina to negatively regulate hyaloid vessel regression during postnatal development via light-dependent OPN5-SLC32A1-DRD2-VEGFR2 signaling. Involved in the light-dependent regulation of retina and vitreous compartment dopamine levels. The polypeptide is Opsin-5 (Opn5) (Mus musculus (Mouse)).